Reading from the N-terminus, the 61-residue chain is Large ribosomal subunit protein uL29 (61 aa).

This sequence belongs to the universal ribosomal protein uL29 family.

This chain is Large ribosomal subunit protein uL29, found in Nitratidesulfovibrio vulgaris (strain DSM 19637 / Miyazaki F) (Desulfovibrio vulgaris).